Here is a 352-residue protein sequence, read N- to C-terminus: Histidine biosynthesis bifunctional protein HisB (352 aa).

The segment at 1–164 (MSQKILFIDR…EIENEILSSF (164 aa)) is histidinol-phosphatase. The Nucleophile role is filled by aspartate 9. Mg(2+) contacts are provided by aspartate 9 and aspartate 11. The active-site Proton donor is aspartate 11. Zn(2+)-binding residues include cysteine 93, histidine 95, cysteine 101, and cysteine 103. Aspartate 130 contributes to the Mg(2+) binding site. The tract at residues 165-352 (RSASYQRTTK…ENLASSKGVI (188 aa)) is imidazoleglycerol-phosphate dehydratase.

This sequence in the N-terminal section; belongs to the histidinol-phosphatase family. It in the C-terminal section; belongs to the imidazoleglycerol-phosphate dehydratase family. Requires Mg(2+) as cofactor. Zn(2+) is required as a cofactor.

It localises to the cytoplasm. The enzyme catalyses D-erythro-1-(imidazol-4-yl)glycerol 3-phosphate = 3-(imidazol-4-yl)-2-oxopropyl phosphate + H2O. The catalysed reaction is L-histidinol phosphate + H2O = L-histidinol + phosphate. It participates in amino-acid biosynthesis; L-histidine biosynthesis; L-histidine from 5-phospho-alpha-D-ribose 1-diphosphate: step 6/9. It functions in the pathway amino-acid biosynthesis; L-histidine biosynthesis; L-histidine from 5-phospho-alpha-D-ribose 1-diphosphate: step 8/9. This is Histidine biosynthesis bifunctional protein HisB from Campylobacter jejuni subsp. doylei (strain ATCC BAA-1458 / RM4099 / 269.97).